The following is a 513-amino-acid chain: ATP synthase subunit alpha (513 aa).

Position 169–176 (glycine 169–threonine 176) interacts with ATP.

It belongs to the ATPase alpha/beta chains family. In terms of assembly, F-type ATPases have 2 components, CF(1) - the catalytic core - and CF(0) - the membrane proton channel. CF(1) has five subunits: alpha(3), beta(3), gamma(1), delta(1), epsilon(1). CF(0) has three main subunits: a(1), b(2) and c(9-12). The alpha and beta chains form an alternating ring which encloses part of the gamma chain. CF(1) is attached to CF(0) by a central stalk formed by the gamma and epsilon chains, while a peripheral stalk is formed by the delta and b chains.

It localises to the cell inner membrane. The catalysed reaction is ATP + H2O + 4 H(+)(in) = ADP + phosphate + 5 H(+)(out). Its function is as follows. Produces ATP from ADP in the presence of a proton gradient across the membrane. The alpha chain is a regulatory subunit. This is ATP synthase subunit alpha from Cupriavidus necator (strain ATCC 17699 / DSM 428 / KCTC 22496 / NCIMB 10442 / H16 / Stanier 337) (Ralstonia eutropha).